The primary structure comprises 857 residues: Elongation factor 2 (857 aa).

The tr-type G domain maps to 17–362 (ANIRNMSVIA…MITIHLPSPV (346 aa)). 26-33 (AHVDHGKS) provides a ligand contact to GTP. Phosphothreonine is present on residues Thr54, Thr57, and Thr59. At Lys152 the chain carries N6-succinyllysine. GTP is bound by residues 158–161 (NKMD) and 216–218 (SGL). N6-acetyllysine is present on Lys235. The residue at position 239 (Lys239) is an N6-acetyllysine; alternate. Residue Lys239 forms a Glycyl lysine isopeptide (Lys-Gly) (interchain with G-Cter in SUMO1); alternate linkage. The residue at position 265 (Tyr265) is a Phosphotyrosine. At Lys272 the chain carries N6-acetyllysine; alternate. Lys272 carries the post-translational modification N6-succinyllysine; alternate. At Lys275 the chain carries N6-acetyllysine. A Glycyl lysine isopeptide (Lys-Gly) (interchain with G-Cter in SUMO) cross-link involves residue Lys322. A Phosphoserine modification is found at Ser325. Residue Tyr373 is modified to Phosphotyrosine. Residue Thr435 is modified to Phosphothreonine. N6-acetyllysine occurs at positions 439 and 445. Ser502 carries the phosphoserine modification. Lys525 is modified (N6,N6,N6-trimethyllysine). Lys529 is covalently cross-linked (Glycyl lysine isopeptide (Lys-Gly) (interchain with G-Cter in SUMO)). Lys572 is modified (N6-succinyllysine). Ser595 is modified (phosphoserine). At Lys619 the chain carries N6-acetyllysine. Diphthamide is present on His715.

It belongs to the GTP-binding elongation factor family. EF-G/EF-2 subfamily. In terms of assembly, binds to 80S ribosomes. Actively translating ribosomes show mutually exclusive binding of eIF5a (EIF5A or EIF5A2) and EEF2/eEF2. Interacts with SERBP1; interaction sequesters EEF2/eEF2 at the A-site of the ribosome, thereby blocking the interaction sites of the mRNA-tRNA complex, promoting ribosome stabilization and hibernation. Interacts with HABP4; interaction takes place at the A-site of hibernating ribosomes and promotes ribosome stabilization. Component of the mRNA surveillance SURF complex, at least composed of ERF1, ERF3 (ERF3A or ERF3B), EEF2, UPF1/RENT1, SMG1, SMG8 and SMG9. Interacts with RBPMS2. Post-translationally, phosphorylation by EF-2 kinase completely inactivates EF-2; it requires prior phosphorylation by CDK2 at Ser-595 during mitotic prometaphase. Phosphorylation by CSK promotes SUMOylation, proteolytic cleavage, and nuclear translocation if the C-terminal fragment. Diphthamide is 2-[3-carboxyamido-3-(trimethyl-ammonio)propyl]histidine. In terms of processing, ISGylated. Post-translationally, proteolytically processed at two sites following phosphorylation by CSK. SUMOylated following phosphorylation by CSK, promotes proteolytic cleavage.

It localises to the cytoplasm. Its subcellular location is the nucleus. The enzyme catalyses GTP + H2O = GDP + phosphate + H(+). Its function is as follows. Catalyzes the GTP-dependent ribosomal translocation step during translation elongation. During this step, the ribosome changes from the pre-translocational (PRE) to the post-translocational (POST) state as the newly formed A-site-bound peptidyl-tRNA and P-site-bound deacylated tRNA move to the P and E sites, respectively. Catalyzes the coordinated movement of the two tRNA molecules, the mRNA and conformational changes in the ribosome. This is Elongation factor 2 (EEF2) from Oryctolagus cuniculus (Rabbit).